Here is a 192-residue protein sequence, read N- to C-terminus: NF-kappa-B inhibitor-interacting Ras-like protein 1 (192 aa).

11 to 18 (GLLSVGKT) contributes to the GTP binding site. Residues 35–43 (DCETMEDVY) carry the Effector region motif. Residues 58-93 (HLYDTRGLQEGVELPKHYFSFADGFVLVYSVNNLES) form an interactions with NFKBIA and NFKBIB region. Residues 61-65 (DTRGL) and 120-123 (NKID) each bind GTP. Positions 168–192 (LSQPQSKSSFPLPGRKNKGNSNSEN) are disordered.

Belongs to the small GTPase superfamily. Ras family. KappaB-Ras subfamily. Interacts with both NF-kappa-B inhibitor alpha (NFKBIA) and beta (NFKBIB) in vitro. However, it probably only interacts with NFKBIB in vivo. Forms a complex with NFKBIB and NF-kappa-B heterodimer (p50/NFKB1 and p65/RELA). Also interacts with c-Rel (REL). Widely expressed.

It localises to the cytoplasm. In terms of biological role, atypical Ras-like protein that acts as a potent regulator of NF-kappa-B activity by preventing the degradation of NF-kappa-B inhibitor beta (NFKBIB) by most signals, explaining why NFKBIB is more resistant to degradation. May act by blocking phosphorylation of NFKBIB and mediating cytoplasmic retention of p65/RELA NF-kappa-B subunit. It is unclear whether it acts as a GTPase. Both GTP- and GDP-bound forms block phosphorylation of NFKBIB. The polypeptide is NF-kappa-B inhibitor-interacting Ras-like protein 1 (NKIRAS1) (Homo sapiens (Human)).